Reading from the N-terminus, the 1233-residue chain is Integrator complex subunit 4 homolog (1233 aa).

HEAT repeat units lie at residues 236–273 (SLINQIIEYIEPLLHSTSPLVRRETIVLLGSIVKNLDK) and 275–310 (SEEIQILLLNYLKDTDFRVREASLKSLSVIFQRGAS). The interval 426–473 (RLQQKQQQQQQQQQQQQQQPPQQQPSQQPNQQPNQQQTNVSGTHIATP) is disordered. The span at 428-462 (QQKQQQQQQQQQQQQQQPPQQQPSQQPNQQPNQQQ) shows a compositional bias: low complexity. HEAT repeat units lie at residues 487–524 (ILESGVIGAFIQGLEDEFYEVRSSAIDSMCELSVRNDE), 525–561 (FAQKNIDFLVDIFNDEIESVRINSINSLRKIGNNVVI), and 563–597 (EEQLHIILANLESSSKEERQSLHRLLTSIHLSNYS). The span at 767 to 792 (NNNTNNNNNNNNNNNNNNNNNNNNNN) shows a compositional bias: low complexity. Disordered stretches follow at residues 767–796 (NNNTNNNNNNNNNNNNNNNNNNNNNNDEND) and 993–1057 (DKKL…TTTT). A compositionally biased stretch (acidic residues) spans 1000–1013 (EENEENEENENNEN). Positions 1014–1030 (ENEKENGKNKEKEKNEN) are enriched in basic and acidic residues. The span at 1046–1057 (KTTSELIKTTTT) shows a compositional bias: low complexity.

Belongs to the Integrator subunit 4 family. In terms of assembly, component of the Integrator complex. The core complex associates with protein phosphatase 2A subunits, to form the Integrator-PP2A (INTAC) complex.

The protein resides in the nucleus. The protein localises to the cytoplasm. In terms of biological role, component of the integrator complex, a multiprotein complex that terminates RNA polymerase II (Pol II) transcription in the promoter-proximal region of genes. The integrator complex provides a quality checkpoint during transcription elongation by driving premature transcription termination of transcripts that are unfavorably configured for transcriptional elongation: the complex terminates transcription by (1) catalyzing dephosphorylation of the C-terminal domain (CTD) of Pol II subunit polr2a, (2) degrading the exiting nascent RNA transcript via endonuclease activity and (3) promoting the release of Pol II from bound DNA. The integrator complex is also involved in terminating the synthesis of non-coding Pol II transcripts, such as enhancer RNAs (eRNAs), small nuclear RNAs (snRNAs), telomerase RNAs and long non-coding RNAs (lncRNAs). The chain is Integrator complex subunit 4 homolog (ints4) from Dictyostelium discoideum (Social amoeba).